The following is a 118-amino-acid chain: Large ribosomal subunit protein bL20 (118 aa).

It belongs to the bacterial ribosomal protein bL20 family.

Functionally, binds directly to 23S ribosomal RNA and is necessary for the in vitro assembly process of the 50S ribosomal subunit. It is not involved in the protein synthesizing functions of that subunit. This chain is Large ribosomal subunit protein bL20, found in Buchnera aphidicola subsp. Acyrthosiphon pisum (strain 5A).